Reading from the N-terminus, the 299-residue chain is 4-hydroxy-tetrahydrodipicolinate synthase (299 aa).

Thr45 serves as a coordination point for pyruvate. The active-site Proton donor/acceptor is the Tyr133. Catalysis depends on Lys161, which acts as the Schiff-base intermediate with substrate. Position 203 (Ile203) interacts with pyruvate.

Belongs to the DapA family. Homotetramer; dimer of dimers.

It localises to the cytoplasm. It carries out the reaction L-aspartate 4-semialdehyde + pyruvate = (2S,4S)-4-hydroxy-2,3,4,5-tetrahydrodipicolinate + H2O + H(+). It participates in amino-acid biosynthesis; L-lysine biosynthesis via DAP pathway; (S)-tetrahydrodipicolinate from L-aspartate: step 3/4. Functionally, catalyzes the condensation of (S)-aspartate-beta-semialdehyde [(S)-ASA] and pyruvate to 4-hydroxy-tetrahydrodipicolinate (HTPA). This is 4-hydroxy-tetrahydrodipicolinate synthase from Blochmanniella pennsylvanica (strain BPEN).